Consider the following 529-residue polypeptide: Type I restriction enzyme StySPI methylase subunit (529 aa).

S-adenosyl-L-methionine-binding positions include 148 to 153 (QYFTPR), 178 to 180 (TAG), and glutamate 216. The interval 424–443 (AEESEVADSEENKNADQHQA) is disordered.

Belongs to the N(4)/N(6)-methyltransferase family. The type I restriction/modification system is composed of three polypeptides R, M and S; the restriction enzyme has stoichiometry R(2)M(2)S(1) while the methyltransferase is M(2)S(1).

It carries out the reaction a 2'-deoxyadenosine in DNA + S-adenosyl-L-methionine = an N(6)-methyl-2'-deoxyadenosine in DNA + S-adenosyl-L-homocysteine + H(+). In terms of biological role, the subtype gamma methyltransferase (M) subunit of a type I restriction enzyme. The M and S subunits together form a methyltransferase (MTase) that methylates A-2 on the top strand and A-3 on the bottom strand of the sequence 5'-AACN(6)GTRC-3'. In the presence of the R subunit the complex can also act as an endonuclease, binding to the same target sequence but cutting the DNA some distance from this site. Whether the DNA is cut or modified depends on the methylation state of the target sequence. When the target site is unmodified, the DNA is cut. When the target site is hemimethylated, the complex acts as a maintenance MTase modifying the DNA so that both strands become methylated. After locating a non-methylated recognition site, the enzyme complex serves as a molecular motor that translocates DNA in an ATP-dependent manner until a collision occurs that triggers cleavage. The chain is Type I restriction enzyme StySPI methylase subunit from Salmonella potsdam.